We begin with the raw amino-acid sequence, 509 residues long: Activin receptor type-1 (509 aa).

The signal sequence occupies residues 1–20 (MVDGVMILPVLIMIALPSPS). The Extracellular segment spans residues 21–123 (MEDEKPKVNP…FPGTQNFHLE (103 aa)). Asn-102 is a glycosylation site (N-linked (GlcNAc...) asparagine). A helical membrane pass occupies residues 124–146 (VGLIILSVVFAVCLLACLLGVAL). Residues 147–509 (RKFKRRNQER…NSLDKLKTDC (363 aa)) lie on the Cytoplasmic side of the membrane. A GS domain is found at 178–207 (STLADLLDHSCTSGSGSGLPFLVQRTVARQ). The 295-residue stretch at 208–502 (ITLLECVGKG…KTLTKIDNSL (295 aa)) folds into the Protein kinase domain. ATP-binding positions include 214 to 222 (VGKGRYGEV) and Lys-235. Asp-336 functions as the Proton acceptor in the catalytic mechanism. The residue at position 501 (Ser-501) is a Phosphoserine.

Belongs to the protein kinase superfamily. TKL Ser/Thr protein kinase family. TGFB receptor subfamily. Interacts with FKBP1A. Interacts with FCHO1. Interacts with CLU. Interacts with type II receptors AMHR2 and ACVR2A. Interacts with BMP7. Interacts with GDF2/BMP9. Interacts with BMP6 (when glycosylated); the interaction may induce HAMP expression. Interacts with TSC22D1/TSC-22. Mg(2+) is required as a cofactor. Mn(2+) serves as cofactor. As to expression, expressed in normal parenchymal cells, endothelial cells, fibroblasts and tumor-derived epithelial cells.

It is found in the membrane. The enzyme catalyses L-threonyl-[receptor-protein] + ATP = O-phospho-L-threonyl-[receptor-protein] + ADP + H(+). It catalyses the reaction L-seryl-[receptor-protein] + ATP = O-phospho-L-seryl-[receptor-protein] + ADP + H(+). Its function is as follows. Bone morphogenetic protein (BMP) type I receptor that is involved in a wide variety of biological processes, including bone, heart, cartilage, nervous, and reproductive system development and regulation. As a type I receptor, forms heterotetrameric receptor complexes with the type II receptors AMHR2, ACVR2A or ACVR2B. Upon binding of ligands such as BMP7 or GDF2/BMP9 to the heteromeric complexes, type II receptors transphosphorylate ACVR1 intracellular domain. In turn, ACVR1 kinase domain is activated and subsequently phosphorylates SMAD1/5/8 proteins that transduce the signal. In addition to its role in mediating BMP pathway-specific signaling, suppresses TGFbeta/activin pathway signaling by interfering with the binding of activin to its type II receptor. Besides canonical SMAD signaling, can activate non-canonical pathways such as p38 mitogen-activated protein kinases/MAPKs. May promote the expression of HAMP, potentially via its interaction with BMP6. The sequence is that of Activin receptor type-1 (ACVR1) from Homo sapiens (Human).